The sequence spans 1216 residues: ATP-dependent DNA helicase Q4 (1216 aa).

Disordered regions lie at residues 72-100 and 113-171; these read EAQE…QSLL and NLKN…PRLG. Composition is skewed to polar residues over residues 86 to 100 and 114 to 137; these read AATQ…QSLL and LKNT…SLST. 2 positions are modified to phosphoserine: Ser-179 and Ser-181. The interval 235–340 is disordered; sequence SEVSVQSPEA…LHASPRPASL (106 aa). Composition is skewed to polar residues over residues 248–262 and 306–320; these read QPAQ…SINS and TQVN…SNQA. The segment at 393-410 adopts a CCHC-type zinc-finger fold; the sequence is DTCFRCGQFGHWASQCSQ. The tract at residues 436-458 is disordered; the sequence is AQRTGTASCHHSGEETQPAAPEL. A Helicase ATP-binding domain is found at 506–684; that stretch reads IMRILSGIST…AQHLGIAGEF (179 aa). 519 to 526 lines the ATP pocket; that stretch reads LPTGAGKS. A DEAH box motif is present at residues 627–630; sequence DEVH. The region spanning 705-872 is the Helicase C-terminal domain; it reads DSDQALVTLL…AVKRLVQRVF (168 aa). Zn(2+) is bound by residues Cys-875, Cys-877, Cys-906, and His-909.

This sequence belongs to the helicase family. RecQ subfamily. In terms of assembly, interacts with UBR1 and UBR2. Interacts with MCM10; this interaction regulates RECQL4 unwinding activity. Interacts with TOPBP1. It depends on Zn(2+) as a cofactor.

The protein resides in the cytoplasm. The protein localises to the nucleus. It carries out the reaction Couples ATP hydrolysis with the unwinding of duplex DNA by translocating in the 3'-5' direction.. It catalyses the reaction ATP + H2O = ADP + phosphate + H(+). Functionally, an ATP-dependent DNA helicase which unwinds dsDNA with a 3'-overhang in a 3'-5' direction. May play a role in development of the palate and the limbs. May modulate chromosome segregation. This Mus musculus (Mouse) protein is ATP-dependent DNA helicase Q4 (Recql4).